Here is a 121-residue protein sequence, read N- to C-terminus: Somatostatin-1 (121 aa).

An N-terminal signal peptide occupies residues 1-24 (MKMVSSSRLRCLLVLLLSLTASIS). The propeptide occupies 25-105 (CSFAGQRDSK…SGGPLLAPRE (81 aa)). The segment at 76–99 (NFPLAEGGPEDAHADLERAASGGP) is disordered. Cys-110 and Cys-121 are joined by a disulfide.

It belongs to the somatostatin family.

Its subcellular location is the secreted. Somatostatin inhibits the release of somatotropin. The chain is Somatostatin-1 (sst1) from Lophius americanus (American angler).